A 424-amino-acid chain; its full sequence is Serine hydroxymethyltransferase 2 (424 aa).

(6S)-5,6,7,8-tetrahydrofolate is bound by residues L125 and 129-131 (GHL). Position 234 is an N6-(pyridoxal phosphate)lysine (K234). E250 contributes to the (6S)-5,6,7,8-tetrahydrofolate binding site.

The protein belongs to the SHMT family. Homodimer. It depends on pyridoxal 5'-phosphate as a cofactor.

The protein localises to the cytoplasm. It carries out the reaction (6R)-5,10-methylene-5,6,7,8-tetrahydrofolate + glycine + H2O = (6S)-5,6,7,8-tetrahydrofolate + L-serine. It participates in one-carbon metabolism; tetrahydrofolate interconversion. Its pathway is amino-acid biosynthesis; glycine biosynthesis; glycine from L-serine: step 1/1. Functionally, catalyzes the reversible interconversion of serine and glycine with tetrahydrofolate (THF) serving as the one-carbon carrier. This reaction serves as the major source of one-carbon groups required for the biosynthesis of purines, thymidylate, methionine, and other important biomolecules. Also exhibits THF-independent aldolase activity toward beta-hydroxyamino acids, producing glycine and aldehydes, via a retro-aldol mechanism. This chain is Serine hydroxymethyltransferase 2, found in Burkholderia mallei (strain ATCC 23344).